A 160-amino-acid polypeptide reads, in one-letter code: Eosinophil cationic protein (160 aa).

Residues 1-27 (MVPKLFTSQICLLLLLGLMGVEGSLHA) form the signal peptide. Positions 28-72 (RPPQFTRAQWFAIQHISLNPPRCTIAMRAINNYRWRCKNQNTFLR) are required for nearly all of the bactericidal activity; partially involved in LPS-binding and bacterial membrane depolarization. The active-site Proton acceptor is the His-42. Cystine bridges form between Cys-50–Cys-110, Cys-64–Cys-123, Cys-82–Cys-138, and Cys-89–Cys-98. Tyr-60 bears the 3'-nitrotyrosine mark. 65 to 69 (KNQNT) is a substrate binding site. 3 N-linked (GlcNAc...) asparagine glycosylation sites follow: Asn-84, Asn-92, and Asn-119. The active-site Proton donor is the His-155.

Belongs to the pancreatic ribonuclease family. In terms of assembly, interacts with bacterial lipopolysaccharide (LPS) and lipoteichoic acid (LTA). In vitro interacts with and insert into lipid bilayers composed of dioleoyl phosphatidylcholine and dioleoyl phosphatidylglycerol. In vitro, tends to form amyloid-like aggregates at pH 3, but not at pH 5, nor 7.

It is found in the secreted. In terms of biological role, cytotoxin and helminthotoxin with low-efficiency ribonuclease activity. Possesses a wide variety of biological activities. Exhibits antibacterial activity, including cytoplasmic membrane depolarization of preferentially Gram-negative, but also Gram-positive strains. Promotes E.coli outer membrane detachment, alteration of the overall cell shape and partial loss of cell content. The chain is Eosinophil cationic protein (RNASE3) from Homo sapiens (Human).